A 194-amino-acid polypeptide reads, in one-letter code: Large ribosomal subunit protein bL12m (194 aa).

A mitochondrion-targeting transit peptide spans 1-33; it reads MSLRILAKRSSSIWMKTRVTPALISPITITTRF. Asn-34 carries N-linked (GlcNAc...) asparagine glycosylation. The tract at residues 101–120 is disordered; that stretch reads AGNVPSSTGEAGSGAEEEAK. Residues 105 to 114 are compositionally biased toward low complexity; sequence PSSTGEAGSG.

This sequence belongs to the bacterial ribosomal protein bL12 family. As to quaternary structure, component of the mitochondrial large ribosomal subunit (mt-LSU). Mature yeast 74S mitochondrial ribosomes consist of a small (37S) and a large (54S) subunit. The 37S small subunit contains a 15S ribosomal RNA (15S mt-rRNA) and 34 different proteins. The 54S large subunit contains a 21S rRNA (21S mt-rRNA) and 46 different proteins. In terms of processing, N-glycosylated.

The protein localises to the mitochondrion. Its function is as follows. Component of the mitochondrial ribosome (mitoribosome), a dedicated translation machinery responsible for the synthesis of mitochondrial genome-encoded proteins, including at least some of the essential transmembrane subunits of the mitochondrial respiratory chain. The mitoribosomes are attached to the mitochondrial inner membrane and translation products are cotranslationally integrated into the membrane. This is Large ribosomal subunit protein bL12m (MNP1) from Saccharomyces cerevisiae (strain ATCC 204508 / S288c) (Baker's yeast).